Here is a 570-residue protein sequence, read N- to C-terminus: Sulfite reductase [NADPH] hemoprotein beta-component (570 aa).

Residues Cys-434, Cys-440, Cys-479, and Cys-483 each contribute to the [4Fe-4S] cluster site. Cys-483 lines the siroheme pocket.

Belongs to the nitrite and sulfite reductase 4Fe-4S domain family. In terms of assembly, alpha(8)-beta(8). The alpha component is a flavoprotein, the beta component is a hemoprotein. Requires siroheme as cofactor. [4Fe-4S] cluster serves as cofactor.

The catalysed reaction is hydrogen sulfide + 3 NADP(+) + 3 H2O = sulfite + 3 NADPH + 4 H(+). It functions in the pathway sulfur metabolism; hydrogen sulfide biosynthesis; hydrogen sulfide from sulfite (NADPH route): step 1/1. Component of the sulfite reductase complex that catalyzes the 6-electron reduction of sulfite to sulfide. This is one of several activities required for the biosynthesis of L-cysteine from sulfate. The sequence is that of Sulfite reductase [NADPH] hemoprotein beta-component from Shigella boydii serotype 4 (strain Sb227).